Reading from the N-terminus, the 692-residue chain is Single-strand DNA endonuclease ASTE1 (692 aa).

Belongs to the asteroid family.

Structure-specific DNA endonuclease that specifically cleaves single-stranded DNA and 3' overhang DNA. This is Single-strand DNA endonuclease ASTE1 (aste1a) from Danio rerio (Zebrafish).